The chain runs to 606 residues: Limonene synthase, chloroplastic (606 aa).

The transit peptide at Met-1 to Ala-38 directs the protein to the chloroplast. 5 residues coordinate (2E)-geranyl diphosphate: Arg-320, Asp-357, Asp-361, Arg-497, and Asp-500. Residues Asp-357 and Asp-361 each contribute to the Mg(2+) site. The DDXXD motif motif lies at Asp-357 to Asp-361. Mg(2+) is bound by residues Asp-500, Thr-504, and Glu-508.

It belongs to the terpene synthase family. Tpsb subfamily. As to quaternary structure, monomer. It depends on Mg(2+) as a cofactor. Requires Mn(2+) as cofactor. As to expression, confined to fruits.

Its subcellular location is the plastid. It is found in the chloroplast. The enzyme catalyses (2E,6E)-farnesyl diphosphate = (E)-beta-farnesene + diphosphate. It carries out the reaction (2E)-geranyl diphosphate = limonene + diphosphate. It catalyses the reaction (2E)-geranyl diphosphate = beta-pinene + diphosphate. The catalysed reaction is (2E)-geranyl diphosphate = sabinene + diphosphate. The enzyme catalyses (2E)-geranyl diphosphate = beta-myrcene + diphosphate. It carries out the reaction (2E)-geranyl diphosphate = alpha-pinene + diphosphate. It catalyses the reaction (2E)-geranyl diphosphate = terpinolene + diphosphate. The protein operates within secondary metabolite biosynthesis; terpenoid biosynthesis. In terms of biological role, monoterpene synthase (mono-TPS) involved in the biosynthesis of monoterpenes natural products, constituent of coffee beverage aroma. Catalyzes the conversion of (2E)-geranyl diphosphate (GPP) into limonene, beta-pinene, sabinene and beta-myrcene, and, as minor products, alpha-pinene and alpha-terpinolene. Can also, with a low efficiency, use farnesyl pyrophosphate (FPP) as substrate to produce beta-farnesene. Not able to use geranylgeranyl pyrophosphate (GGPP) as substrate. The protein is Limonene synthase, chloroplastic of Coffea arabica (Arabian coffee).